A 96-amino-acid polypeptide reads, in one-letter code: MDKLKIQVEVAYALPEQQKIIPLAVVEGTTAYEAVQMSGITHFFPQIELDSAKMGIFGKSIPEPKSHALREGDRVEIYRPLKIDPKQARLNRAKKG.

Belongs to the UPF0125 (RnfH) family.

The protein is Protein RnfH of Hahella chejuensis (strain KCTC 2396).